Here is a 673-residue protein sequence, read N- to C-terminus: MRLNPGQQQAVEFVTGPCLVLAGAGSGKTRVITNKIAHLIRGCGYQARHIAAVTFTNKAAREMKERVGQTLGRKEARGLMISTFHTLGLDIIKREYAALGMKANFSLFDDTDQLALLKELTEGLIEDDKVLLQQLISTISNWKNDLKTPSQAAASAIGERDRIFAHCYGLYDAHLKACNVLDFDDLILLPTLLLQRNEEVRKRWQNKIRYLLVDEYQDTNTSQYELVKLLVGSRARFTVVGDDDQSIYSWRGARPQNLVLLSQDFPALKVIKLEQNYRSSGRILKAANILIANNPHVFEKRLFSELGYGAELKVLSANNEEHEAERVTGELIAHHFVNKTQYKDYAILYRGNHQSRVFEKFLMQNRIPYKISGGTSFFSRPEIKDLLAYLRVLTNPDDDSAFLRIVNTPKREIGPATLKKLGEWAMTRNKSMFTASFDMGLSQTLSGRGYEALTRFTHWLAEIQRLAEREPIAAVRDLIHGMDYESWLYETSPSPKAAEMRMKNVNQLFSWMTEMLEGSELDEPMTLTQVVTRFTLRDMMERGESEEELDQVQLMTLHASKGLEFPYVYMVGMEEGFLPHQSSIDEDNIDEERRLAYVGITRAQKELTFTLCKERRQYGELVRPEPSRFLLELPQDDLIWEQERKVVSAEERMQKGQSHLANLKAMMAAKRGK.

The UvrD-like helicase ATP-binding domain occupies Met-1–Ser-280. ATP-binding positions include Ala-22 to Thr-29 and Arg-278. The UvrD-like helicase C-terminal domain maps to Gly-281 to Gly-562.

The protein belongs to the helicase family. UvrD subfamily. As to quaternary structure, homodimer in association with DNA.

The catalysed reaction is Couples ATP hydrolysis with the unwinding of duplex DNA by translocating in the 3'-5' direction.. The enzyme catalyses ATP + H2O = ADP + phosphate + H(+). Its activity is regulated as follows. Binding to DNA induces dimerization, which is required for DNA helicase activity. Helicase activity is stimulated by PriC. In terms of biological role, rep helicase is a single-stranded (ss)DNA-dependent ATPase involved in DNA replication; it can initiate unwinding at a nick in the DNA. It binds to ssDNA and acts in a progressive fashion along the DNA in the 3' to 5' direction. Binds double-stranded (ds)DNA with a 5' ss- but not 3' ss-extension and forked structures with either lagging or leading ssDNA. Part of the PriC-Rep pathway for restart of stalled replication forks, which reloads the DnaB replicative helicase on sites other than the origin of replication. The protein is ATP-dependent DNA helicase Rep of Escherichia coli (strain K12).